Reading from the N-terminus, the 234-residue chain is Structural PPIase-like protein L605 (234 aa).

The 188-residue stretch at 18 to 205 folds into the PPIase cyclophilin-type domain; sequence YMDIVLNNEI…PTFSIGKCGA (188 aa).

Belongs to the cyclophilin-type PPIase family. In terms of assembly, homotrimer.

The protein resides in the virion. Its subcellular location is the host cytoplasm. In Acanthamoeba polyphaga mimivirus (APMV), this protein is Structural PPIase-like protein L605.